The following is a 2234-amino-acid chain: Bridge-like lipid transfer protein family member 2 (2234 aa).

A signal peptide spans 1 to 31; sequence MPLFLSALLVLLLVALSALFLGRWLVVRLAT. Residues 29–108 are transmembrane domain; it reads LATRWCQRKL…LQKVSSLSAP (80 aa). Position 563 is a phosphoserine (Ser563). The disordered stretch occupies residues 1496 to 1529; sequence QMSAKKPKRGIPPSAQVPPHVSTPSFSGRPDKGS. Residues 1814-1885 are a coiled coil; it reads ILHLQEAVRQ…LNILIRCFKD (72 aa). Phosphoserine is present on residues Ser1846 and Ser2090.

Belongs to the SABRE family.

It localises to the cell membrane. It is found in the endoplasmic reticulum membrane. The protein resides in the mitochondrion membrane. Functionally, tube-forming lipid transport protein which binds to phosphatidylinositols and affects phosphatidylinositol-4,5-bisphosphate (PtdIns-4,5-P2) distribution. This chain is Bridge-like lipid transfer protein family member 2 (Bltp2), found in Mus musculus (Mouse).